A 339-amino-acid polypeptide reads, in one-letter code: Probable E3 ubiquitin-protein ligase BAH1-like 1 (339 aa).

Residues 1 to 163 (MKFGAIYEEY…GSVSGRDFKS (163 aa)) enclose the SPX domain. An RING-type zinc finger spans residues 235 to 284 (CPICLDTLFNPYALSCGHLFCKGCACGAASVYIFQGVKSAPPEAKCPVCR).

It belongs to the RING-type zinc finger family.

It catalyses the reaction S-ubiquitinyl-[E2 ubiquitin-conjugating enzyme]-L-cysteine + [acceptor protein]-L-lysine = [E2 ubiquitin-conjugating enzyme]-L-cysteine + N(6)-ubiquitinyl-[acceptor protein]-L-lysine.. Its pathway is protein modification; protein ubiquitination. This Oryza sativa subsp. indica (Rice) protein is Probable E3 ubiquitin-protein ligase BAH1-like 1.